Here is a 232-residue protein sequence, read N- to C-terminus: Transcriptional regulatory protein CpxR (232 aa).

The region spanning lysine 3 to leucine 115 is the Response regulatory domain. Aspartate 51 carries the post-translational modification 4-aspartylphosphate. The segment at residues serine 131 to serine 230 is a DNA-binding region (ompR/PhoB-type).

Interacts with cognate sensor kinase CpxA. Phosphorylated by CpxA.

The protein resides in the cytoplasm. Its activity is regulated as follows. The two-component system is activated by envelope stress such as overexpression of some (misfolded) periplasmic proteins. In terms of biological role, response regulator member of the two-component regulatory system CpxA/CpxR which responds to envelope stress response by activating or, in some cases, repressing expression of downstream genes. Binds to the promoter regions of various genes in vitro, including ompC, cpxP, ryhB and mrkA and, when CpxR is phosphorylated, pecO. Represses expression of the major pilin of type 3 fimbriae MrkA as well as that of type 1 fimbriae FimA. Repression of expression of MrkA appears to be indirect, mediated by activation of the iron homeostasis regulator RyhB. In Klebsiella pneumoniae subsp. pneumoniae (strain HS11286), this protein is Transcriptional regulatory protein CpxR.